A 276-amino-acid polypeptide reads, in one-letter code: Rhomboid protease GlpG (276 aa).

The next 6 helical transmembrane spans lie at 94 to 114, 142 to 162, 169 to 189, 192 to 212, 229 to 249, and 250 to 270; these read GPVT…MQIL, ALMH…WYLG, LGSG…GYVQ, FSGP…GYVW, LIIF…GMSM, and ANGA…VDSL. S201 serves as the catalytic Nucleophile. H254 is an active-site residue.

The protein belongs to the peptidase S54 family.

The protein localises to the cell inner membrane. The catalysed reaction is Cleaves type-1 transmembrane domains using a catalytic dyad composed of serine and histidine that are contributed by different transmembrane domains.. Functionally, rhomboid-type serine protease that catalyzes intramembrane proteolysis. The polypeptide is Rhomboid protease GlpG (Escherichia fergusonii (strain ATCC 35469 / DSM 13698 / CCUG 18766 / IAM 14443 / JCM 21226 / LMG 7866 / NBRC 102419 / NCTC 12128 / CDC 0568-73)).